The sequence spans 149 residues: UPF0102 protein Bpro_0391 (149 aa).

Residues 1–30 (MWFSRKQVVKPPPDGSRAQPGQVTTKSRGD) are disordered.

It belongs to the UPF0102 family.

This chain is UPF0102 protein Bpro_0391, found in Polaromonas sp. (strain JS666 / ATCC BAA-500).